Here is a 91-residue protein sequence, read N- to C-terminus: Large ribosomal subunit protein bL27 (91 aa).

Residues 1-10 are compositionally biased toward gly residues; it reads MAQKKGGGST. Residues 1 to 20 form a disordered region; it reads MAQKKGGGSTRNGRDSQPKM.

The protein belongs to the bacterial ribosomal protein bL27 family.

This is Large ribosomal subunit protein bL27 from Verminephrobacter eiseniae (strain EF01-2).